The following is a 215-amino-acid chain: Adenylate kinase (215 aa).

10–15 (GAGKGT) contributes to the ATP binding site. Residues 30-59 (STGDLLRAAVAAGTPLGKEAKAYMDRGELV) are NMP. AMP-binding positions include Thr-31, Arg-36, 57–59 (ELV), 85–88 (GFPR), and Gln-92. The LID stretch occupies residues 126–163 (GRRTCKSCGQMYNVYYSPSKVEGKCDKCGGELFQRDDD). Arg-127 provides a ligand contact to ATP. Residues Cys-130, Cys-133, Cys-150, and Cys-153 each coordinate Zn(2+). The AMP site is built by Arg-160 and Arg-171. Gly-199 lines the ATP pocket.

It belongs to the adenylate kinase family. In terms of assembly, monomer.

The protein resides in the cytoplasm. It catalyses the reaction AMP + ATP = 2 ADP. It functions in the pathway purine metabolism; AMP biosynthesis via salvage pathway; AMP from ADP: step 1/1. Functionally, catalyzes the reversible transfer of the terminal phosphate group between ATP and AMP. Plays an important role in cellular energy homeostasis and in adenine nucleotide metabolism. The protein is Adenylate kinase of Thermodesulfovibrio yellowstonii (strain ATCC 51303 / DSM 11347 / YP87).